A 478-amino-acid chain; its full sequence is Zinc metalloproteinase/disintegrin (478 aa).

The N-terminal stretch at Met1 to Ser20 is a signal peptide. Positions Ile21–Leu187 are excised as a propeptide. Disulfide bonds link Cys304–Cys384, Cys344–Cys368, and Cys346–Cys351. His329 contacts Zn(2+). The active site involves Glu330. The Zn(2+) site is built by His333 and His339. The propeptide occupies Leu390 to Leu405. Residues Thr397–Ala478 enclose the Disintegrin domain. Cystine bridges form between Cys411–Cys426, Cys413–Cys421, Cys420–Cys443, Cys434–Cys440, Cys439–Cys464, and Cys452–Cys471. The Cell attachment site signature appears at Arg456–Asp458.

This sequence belongs to the venom metalloproteinase (M12B) family. P-II subfamily. P-IIa sub-subfamily. In terms of assembly, monomer. As to expression, expressed by the venom gland.

It is found in the secreted. Binds alpha-5/beta-1 (ITGAV/ITGB1), alpha-V/beta-3 (ITGAV/ITGB3) and alpha-M/beta-2 (ITGAM/ITGB2) integrins. Is a potent inhibitor of platelet aggregation induced by ADP, collagen, and thrombin. Induces neutrophil chemotaxis and inhibits the chemotaxis of human neutrophils toward fMLP, IL-8, and jarastatin itself. Directly activates an integrin-coupled signaling and modulate the MAPK pathway in different ways, leading the neutrophils to express different functional response. Induces Erk-2 translocation to nucleus and a delay of the spontaneous apoptosis of neutrophils. Increases the IL-8 mRNA levels in neutrophils. When injected simultaneously with melanoma cells in mice, jarastatin, flavoridin (FL) and kistrin (KR) significantly reduce tumor lung colonization. Inhibits mouse melanoma B16F10 cell growth in vitro. When it interacts with melanoma cells, it induces actin cytoskeleton rearrangement, increasing actin polymerization and PTK2/FAK1 phosphorylation. Interferes with NF-kappaB translocation in melanoma cells. In Bothrops jararaca (Jararaca), this protein is Zinc metalloproteinase/disintegrin.